Here is a 515-residue protein sequence, read N- to C-terminus: Histidine ammonia-lyase (515 aa).

Positions 146–148 (ASG) form a cross-link, 5-imidazolinone (Ala-Gly). Serine 147 bears the 2,3-didehydroalanine (Ser) mark.

The protein belongs to the PAL/histidase family. Post-translationally, contains an active site 4-methylidene-imidazol-5-one (MIO), which is formed autocatalytically by cyclization and dehydration of residues Ala-Ser-Gly.

It is found in the cytoplasm. It carries out the reaction L-histidine = trans-urocanate + NH4(+). Its pathway is amino-acid degradation; L-histidine degradation into L-glutamate; N-formimidoyl-L-glutamate from L-histidine: step 1/3. In Ralstonia nicotianae (strain ATCC BAA-1114 / GMI1000) (Ralstonia solanacearum), this protein is Histidine ammonia-lyase (hutH).